Consider the following 82-residue polypeptide: Exodeoxyribonuclease 7 small subunit (82 aa).

This sequence belongs to the XseB family. In terms of assembly, heterooligomer composed of large and small subunits.

It localises to the cytoplasm. It carries out the reaction Exonucleolytic cleavage in either 5'- to 3'- or 3'- to 5'-direction to yield nucleoside 5'-phosphates.. Bidirectionally degrades single-stranded DNA into large acid-insoluble oligonucleotides, which are then degraded further into small acid-soluble oligonucleotides. The protein is Exodeoxyribonuclease 7 small subunit of Mycobacterium avium (strain 104).